Here is a 235-residue protein sequence, read N- to C-terminus: Small ribosomal subunit protein uS2 (235 aa).

The protein belongs to the universal ribosomal protein uS2 family.

The sequence is that of Small ribosomal subunit protein uS2 from Geobacillus thermodenitrificans (strain NG80-2).